Consider the following 303-residue polypeptide: MNRGAKVKTNGDNLALSTRAKKLLTKSIDTLETIIDNDQCSPQEKATIALKILEMAGIFTEFKHHSVDKLVAKAEEKIRRLQSQYPQINLSLSEPTLHQQSESIFLPGTYGEIKNFLSPEENQKIITEAIDKKEEYIKSNTTTKANQYRQSYVLFSQKIPALSALIRERIKQKLPELLGQLNFSPFEVAEIELQLTAHNDGCYYRIHNDAGSEKTASRQITYVYYFYQEPKAFSGGELRLYDTELKNNTITTHPKFQTITPINNSIIFFNSRCRHEVMSVVCPSREFAHSRFTVNGWIRKKMN.

Residues 173–300 form the Fe2OG dioxygenase domain; the sequence is KLPELLGQLN…RFTVNGWIRK (128 aa).

The cofactor is Fe(2+). Requires L-ascorbate as cofactor.

This is an uncharacterized protein from Synechocystis sp. (strain ATCC 27184 / PCC 6803 / Kazusa).